Here is a 255-residue protein sequence, read N- to C-terminus: Phycoerythrobilin:ferredoxin oxidoreductase (255 aa).

This sequence belongs to the HY2 family.

The enzyme catalyses (3Z)-phycoerythrobilin + oxidized 2[4Fe-4S]-[ferredoxin] = 15,16-dihydrobiliverdin + reduced 2[4Fe-4S]-[ferredoxin] + 2 H(+). Its function is as follows. Catalyzes the two-electron reduction of the C2 and C3(1) diene system of 15,16-dihydrobiliverdin. This chain is Phycoerythrobilin:ferredoxin oxidoreductase (pebB), found in Nostoc punctiforme (strain ATCC 29133 / PCC 73102).